We begin with the raw amino-acid sequence, 448 residues long: Glutamyl-tRNA reductase (448 aa).

Residues 49-52, S109, 114-116, and Q120 each bind substrate; these read TCNR and ETQ. C50 (nucleophile) is an active-site residue. 189–194 contacts NADP(+); it reads GAGEMG.

It belongs to the glutamyl-tRNA reductase family. Homodimer.

It catalyses the reaction (S)-4-amino-5-oxopentanoate + tRNA(Glu) + NADP(+) = L-glutamyl-tRNA(Glu) + NADPH + H(+). It participates in porphyrin-containing compound metabolism; protoporphyrin-IX biosynthesis; 5-aminolevulinate from L-glutamyl-tRNA(Glu): step 1/2. Its function is as follows. Catalyzes the NADPH-dependent reduction of glutamyl-tRNA(Glu) to glutamate 1-semialdehyde (GSA). The protein is Glutamyl-tRNA reductase of Staphylococcus epidermidis (strain ATCC 12228 / FDA PCI 1200).